The following is a 506-amino-acid chain: Chorion-specific transcription factor GCMb (506 aa).

Residues 19-174 (LSWDINDPQM…KSETEARRSA (156 aa)) constitute a DNA-binding region (GCM). Zn(2+)-binding residues include cysteine 81, cysteine 87, cysteine 91, cysteine 118, cysteine 121, cysteine 130, histidine 157, and histidine 159. Residues 155 to 172 (GVHDHPRPESKSETEARR) show a composition bias toward basic and acidic residues. Residues 155 to 213 (GVHDHPRPESKSETEARRSAIKRQMASFYQPQKKRIRESEAEENQDSSGHFSNIPPLEN) are disordered. The interval 379–395 (LQTVITTTTKVSYQAYQ) is C-terminal conserved inhibitory domain (CCID).

The protein resides in the nucleus. Functionally, transcription factor that binds specific sequences on gene promoters and activate their transcription. Through the regulation of gene transcription, may play a role in parathyroid gland development. The sequence is that of Chorion-specific transcription factor GCMb from Homo sapiens (Human).